Consider the following 277-residue polypeptide: Leucine-rich repeat-containing protein 10 (277 aa).

LRR repeat units follow at residues Glu53–Leu74, Asn76–Leu97, Gln99–Leu120, Asn122–Leu143, Leu145–Gln167, Glu168–Met189, and Phe191–Ser212.

The protein localises to the nucleus. May play important roles in cardiac development and/or cardiac function. This Homo sapiens (Human) protein is Leucine-rich repeat-containing protein 10 (LRRC10).